The primary structure comprises 911 residues: Brevican core protein (911 aa).

Positions 1–22 are cleaved as a signal peptide; sequence MAQLFLPLLAALVLAQAPAALA. Residues 36 to 155 enclose the Ig-like V-type domain; it reads RVRIAGDAPL…SSDAVEVKVK (120 aa). 5 disulfide bridges follow: C57-C137, C179-C250, C203-C224, C277-C352, and C301-C322. N-linked (GlcNAc...) asparagine glycosylation occurs at N130. 2 consecutive Link domains span residues 157 to 252 and 257 to 354; these read VVFL…YCYA and GELF…YCFR. N-linked (GlcNAc...) asparagine glycosylation occurs at N337. The tract at residues 391–641 is disordered; sequence QLPQEATESE…PTDSASRGGV (251 aa). S418 carries the post-translational modification Phosphoserine. The O-linked (Xyl...) (chondroitin sulfate) serine glycan is linked to S418. Acidic residues predominate over residues 454–478; the sequence is EEEEKYEDEEEKEEEEEEEEVEDEA. 2 O-glycosylated at two sites regions span residues 520–530 and 540–545; these read SPLPDGESEAS and TETLPT. Residues 569 to 575 are O-glycosylated at one site; it reads TGGPELS. Positions 612–627 are enriched in polar residues; sequence EDNSGRTAPAGTSVQA. A646 carries GPI-anchor amidated alanine lipidation. The EGF-like domain occupies 646–682; it reads ASGDCVPSPCHNGGTCLEEEEGVRCLCLPGYGGDLCD. 8 cysteine pairs are disulfide-bonded: C650–C661, C655–C670, C672–C681, C688–C699, C716–C808, C784–C800, C815–C858, and C844–C871. Residues 695–809 form the C-type lectin domain; sequence FQGACYKHFS…CNYHLSYTCK (115 aa). Residues 813 to 873 enclose the Sushi domain; it reads VSCGPPPELP…WEAPQISCVP (61 aa). O-linked (GalNAc...) serine glycosylation is found at S905 and S906.

This sequence belongs to the aggrecan/versican proteoglycan family. Interacts with TNR. O-glycosylated; contains chondroitin sulfate. O-glycosylated with a core 1 or possibly core 8 glycan. As to expression, expressed in the retina, specifically in the inner nuclear layer, inner plexiform layer and ganglion cell layer (at protein level). Detected in cerebrospinal fluid (at protein level). Detected in urine (at protein level).

It is found in the secreted. It localises to the extracellular space. The protein localises to the extracellular matrix. Its subcellular location is the membrane. In terms of biological role, may play a role in the terminally differentiating and the adult nervous system during postnatal development. Could stabilize interactions between hyaluronan (HA) and brain proteoglycans. The polypeptide is Brevican core protein (BCAN) (Homo sapiens (Human)).